The following is a 93-amino-acid chain: UPF0521 protein B (93 aa).

The stretch at 2–58 forms a coiled coil; it reads SLKEVITSLKNDFHSINKEIDSMKENNEKQEEKIFQEIKKLKLEMELLRKDNLSFKT.

Belongs to the UPF0521 family.

In Dictyostelium discoideum (Social amoeba), this protein is UPF0521 protein B.